Consider the following 168-residue polypeptide: Myelin basic protein (168 aa).

Residue Ala-1 is modified to N-acetylalanine. Phosphoserine is present on residues Ser-7 and Ser-12. Tyr-14 is modified (phosphotyrosine). The residue at position 17 (Thr-17) is a Phosphothreonine. Phosphoserine is present on Ser-19. Thr-20 carries the phosphothreonine modification. Residues Arg-25 and Arg-31 each carry the citrulline modification. Thr-35 is modified (phosphothreonine). Ser-40 carries the post-translational modification Phosphoserine. Residues 42–84 (GRFFSSDRGAPKRGSGKDHAARTTHYGSLPQKSGHRPQDENPV) form a disordered region. Omega-N-methylarginine is present on residues Arg-43 and Arg-49. Positions 45 to 86 (FSSDRGAPKRGSGKDHAARTTHYGSLPQKSGHRPQDENPVVH) are induces experimental autoimmune encephalomyelitis (EAE). Ser-56 bears the Phosphoserine mark. Residue Thr-65 is modified to Phosphothreonine. Tyr-67 is subject to Phosphotyrosine. The residue at position 74 (Ser-74) is a Phosphoserine. Thr-93 and Thr-96 each carry phosphothreonine. The residue at position 101 (Gln-101) is a Deamidated glutamine; partial. Arg-105 bears the Omega-N-methylarginine; alternate mark. Arg-105 is modified (symmetric dimethylarginine; alternate). A Phosphoserine modification is found at Ser-113. Lys-120 carries the N6-acetyllysine modification. Arg-128 bears the Citrulline mark. Gln-145 is subject to Deamidated glutamine. Arg-157 is modified (citrulline). Ser-159 carries the phosphoserine modification. Ser-163 carries the post-translational modification Phosphoserine; by UHMK1. Citrulline is present on Arg-168.

The protein belongs to the myelin basic protein family. Homodimer. As in other animals, several charge isomers may be produced as a result of optional post-translational modifications, such as phosphorylation of serine or threonine residues, deamidation of glutamine or asparagine residues, citrullination and methylation of arginine residues. Post-translationally, phosphorylated by TAOK2, VRK2, MAPK11, MAPK12, MAPK14 and MINK1. In terms of processing, proteolytically cleaved in B cell lysosomes by cathepsin CTSG which degrades the major immunogenic MBP epitope and prevents the activation of MBP-specific autoreactive T cells. Found in both the central and the peripheral nervous system.

Its subcellular location is the myelin membrane. Is, with PLP, the most abundant protein component of the myelin membrane in the CNS. Has a role in both the formation and stabilization of this compact multilayer arrangement of bilayers. Each splice variant and charge isomer may have a specialized function in the assembly of an optimized, biochemically functional myelin membrane. The sequence is that of Myelin basic protein (MBP) from Oryctolagus cuniculus (Rabbit).